We begin with the raw amino-acid sequence, 128 residues long: Disintegrin ocellatusin (128 aa).

The signal sequence occupies residues 1–20; sequence MIPVLLVTICLAVFPFQGSS. The propeptide occupies 21–65; sequence IILESGNINDYEIVYPKKVAVLPTGAMNSAHPCYDPVTCQPKEKE. Residues 26–112 form the Disintegrin domain; the sequence is GNINDYEIVY…DCPRNPYKGE (87 aa). Intrachain disulfides connect cysteine 53–cysteine 59, cysteine 67–cysteine 76, cysteine 72–cysteine 97, cysteine 73–cysteine 102, and cysteine 85–cysteine 104. Positions 89–91 match the Cell attachment site motif; the sequence is RGD. The propeptide occupies 116-128; that stretch reads MEWPAPAKGSVLM.

In terms of assembly, monomer. As to expression, expressed by the venom gland.

Its subcellular location is the secreted. Functionally, the disintegrin ocellatusin-10c1 is a poor inhibitor of platelet aggregation. The disintegrin inhibits the adhesion of cells expressing the RGD-dependent integrin alpha-5/beta-1 (ITGA5/ITGB1) to immobilized fibronectin. Inhibition on alpha-2b/beta-3 (ITGA2B/ITGB3) is low, and there is no inhibition on alpha-1/beta-1 (ITGA1/ITGB1), alpha-2/beta-1 (ITGA2/ITGB1) and alpha-6/beta-1 (ITGA6/ITGB1). In terms of biological role, the short monomeric disintegrin ocellatusin inhibits ADP-induced platelet aggregation (IC(50)=168 nM). Inhibits alpha-5/beta-1 (ITGA5/ITGB1) integrin and induces the expression of a ligand-induced binding site epitope on beta-1 integrin subunit. Has a direct chemotactic stimulus on human neutrophils in vitro. This chain is Disintegrin ocellatusin, found in Echis ocellatus (Ocellated saw-scaled viper).